The primary structure comprises 812 residues: Valine--tRNA ligase (812 aa).

The 'HIGH' region signature appears at 46-56 (PTVSGQLHIGH). Residues 536–540 (KMSKS) carry the 'KMSKS' region motif. Lys539 is a binding site for ATP.

This sequence belongs to the class-I aminoacyl-tRNA synthetase family. ValS type 2 subfamily. As to quaternary structure, monomer.

Its subcellular location is the cytoplasm. It catalyses the reaction tRNA(Val) + L-valine + ATP = L-valyl-tRNA(Val) + AMP + diphosphate. In terms of biological role, catalyzes the attachment of valine to tRNA(Val). As ValRS can inadvertently accommodate and process structurally similar amino acids such as threonine, to avoid such errors, it has a 'posttransfer' editing activity that hydrolyzes mischarged Thr-tRNA(Val) in a tRNA-dependent manner. The sequence is that of Valine--tRNA ligase from Rickettsia rickettsii (strain Iowa).